We begin with the raw amino-acid sequence, 1016 residues long: Coiled-coil domain-containing protein 57 (1016 aa).

The tract at residues 1–503 is centrosomal targeting domain; it reads MLPLCSEREL…HGLLPGQEAQ (503 aa). Coiled coils occupy residues 14-607, 676-700, and 748-775; these read LARK…PVKT, SEVDQVHLEVLELQKQVAELRKHLK, and VTHLQRKLKDAARKILSLRLEREQLLEM. Disordered stretches follow at residues 500-519 and 549-573; these read QEAQVPPQQHEGEIRADSPS and HLPPAQPEECSNADPDPKAGGDSTP. A microtubule binding domain region spans residues 604–1016; that stretch reads PVKTSVATAD…SRIRNYNLKD (413 aa). 2 disordered regions span residues 781-921 and 933-1016; these read AEQG…LASS and GSSP…NLKD. Composition is skewed to polar residues over residues 846–859 and 934–945; these read QPHSAQVGSKTNTP and SSPSGVPSQDNS.

Interacts with CEP63; the interaction is required for their location to proximal end of centrioles. Interacts with microtubules.

Its subcellular location is the cytoplasm. The protein resides in the cytoskeleton. The protein localises to the microtubule organizing center. It localises to the centrosome. It is found in the centriolar satellite. Its subcellular location is the centriole. The protein resides in the spindle. In terms of biological role, pleiotropic regulator of centriole duplication, mitosis, and ciliogenesis. Critical interface between centrosome and microtubule-mediated cellular processes. Centriole duplication protein required for recruitment of CEP63, CEP152, and PLK4 to the centrosome. Independent of its centrosomal targeting, localizes to and interacts with microtubules and regulates microtubule nucleation, stability, and mitotic progression. The chain is Coiled-coil domain-containing protein 57 from Mus musculus (Mouse).